The primary structure comprises 154 residues: Transcriptional repressor NrdR (154 aa).

A zinc finger spans residues Cys3–Cys34. An ATP-cone domain is found at Pro49–Glu139.

Belongs to the NrdR family. Zn(2+) is required as a cofactor.

Functionally, negatively regulates transcription of bacterial ribonucleotide reductase nrd genes and operons by binding to NrdR-boxes. This is Transcriptional repressor NrdR from Pseudomonas fluorescens (strain ATCC BAA-477 / NRRL B-23932 / Pf-5).